The primary structure comprises 334 residues: Fructose-1,6-bisphosphatase class 1 (334 aa).

Mg(2+)-binding residues include E90, D113, L115, and D116. Substrate-binding positions include 116-119 (DGSS), N209, Y242, and K272. E278 serves as a coordination point for Mg(2+).

It belongs to the FBPase class 1 family. As to quaternary structure, homotetramer. Mg(2+) serves as cofactor.

The protein resides in the cytoplasm. It carries out the reaction beta-D-fructose 1,6-bisphosphate + H2O = beta-D-fructose 6-phosphate + phosphate. The protein operates within carbohydrate biosynthesis; gluconeogenesis. The sequence is that of Fructose-1,6-bisphosphatase class 1 from Actinobacillus pleuropneumoniae serotype 5b (strain L20).